The primary structure comprises 272 residues: 3-keto-5-aminohexanoate cleavage enzyme (272 aa).

Position 15 (Glu-15) interacts with (5S)-5-amino-3-oxohexanoate. Residues His-47 and His-49 each contribute to the Zn(2+) site. (5S)-5-amino-3-oxohexanoate-binding residues include Ser-83, Gly-86, and Thr-107. Glu-226 contacts Zn(2+).

The protein belongs to the BKACE family. Kce subfamily. Homotetramer. Zn(2+) serves as cofactor.

The catalysed reaction is (5S)-5-amino-3-oxohexanoate + acetyl-CoA = (3S)-3-aminobutanoyl-CoA + acetoacetate. Its pathway is amino-acid degradation; L-lysine degradation via acetate pathway. With respect to regulation, 3-fold increase in activity by addition of 10 mM 2-mercaptoethanol. Addition of CoCl(2) and to a lesser extent MnCl(2) increases the activity but not MgCl(2). Inhibited by phosphate buffer but not by 5,5'-dithio-2-nitrobenzoic acid. Functionally, involved in the anaerobic fermentation of lysine. Catalyzes the reversible reaction between 3-keto-5-aminohexanoate (KAH) and acetyl-CoA to form 3-aminobutyryl-CoA and acetoacetate. The reaction involves the deprotonation of KAH, the nucleophilic addition onto acetyl-CoA and the intramolecular transfer of the CoA moiety. It can also use beta-alanyl-CoA as substrate. This chain is 3-keto-5-aminohexanoate cleavage enzyme, found in Fusobacterium nucleatum subsp. nucleatum (strain ATCC 25586 / DSM 15643 / BCRC 10681 / CIP 101130 / JCM 8532 / KCTC 2640 / LMG 13131 / VPI 4355).